The chain runs to 166 residues: Large ribosomal subunit protein uL10 (166 aa).

It belongs to the universal ribosomal protein uL10 family. In terms of assembly, part of the ribosomal stalk of the 50S ribosomal subunit. The N-terminus interacts with L11 and the large rRNA to form the base of the stalk. The C-terminus forms an elongated spine to which L12 dimers bind in a sequential fashion forming a multimeric L10(L12)X complex.

Forms part of the ribosomal stalk, playing a central role in the interaction of the ribosome with GTP-bound translation factors. The sequence is that of Large ribosomal subunit protein uL10 from Pseudomonas syringae pv. syringae (strain B728a).